The following is a 221-amino-acid chain: Ribosomal RNA large subunit methyltransferase E (221 aa).

Gly-72, Trp-74, Asp-91, Asp-107, and Asp-131 together coordinate S-adenosyl-L-methionine. Residue Lys-171 is the Proton acceptor of the active site.

Belongs to the class I-like SAM-binding methyltransferase superfamily. RNA methyltransferase RlmE family.

Its subcellular location is the cytoplasm. The catalysed reaction is uridine(2552) in 23S rRNA + S-adenosyl-L-methionine = 2'-O-methyluridine(2552) in 23S rRNA + S-adenosyl-L-homocysteine + H(+). In terms of biological role, specifically methylates the uridine in position 2552 of 23S rRNA at the 2'-O position of the ribose in the fully assembled 50S ribosomal subunit. In Zymomonas mobilis subsp. mobilis (strain ATCC 31821 / ZM4 / CP4), this protein is Ribosomal RNA large subunit methyltransferase E.